Here is a 94-residue protein sequence, read N- to C-terminus: Protein RESPONSE TO LOW SULFUR 1 (94 aa).

Residues 8–35 (VTVAAEEMDELRRRNIELSREVAEMKTE) are a coiled coil.

In Arabidopsis thaliana (Mouse-ear cress), this protein is Protein RESPONSE TO LOW SULFUR 1.